Here is a 405-residue protein sequence, read N- to C-terminus: ATP phosphoribosyltransferase regulatory subunit (405 aa).

Belongs to the class-II aminoacyl-tRNA synthetase family. HisZ subfamily. In terms of assembly, heteromultimer composed of HisG and HisZ subunits.

It is found in the cytoplasm. Its pathway is amino-acid biosynthesis; L-histidine biosynthesis; L-histidine from 5-phospho-alpha-D-ribose 1-diphosphate: step 1/9. Required for the first step of histidine biosynthesis. May allow the feedback regulation of ATP phosphoribosyltransferase activity by histidine. This Oceanobacillus iheyensis (strain DSM 14371 / CIP 107618 / JCM 11309 / KCTC 3954 / HTE831) protein is ATP phosphoribosyltransferase regulatory subunit.